The following is a 105-amino-acid chain: Small ribosomal subunit protein uS10 (105 aa).

This sequence belongs to the universal ribosomal protein uS10 family. Part of the 30S ribosomal subunit.

In terms of biological role, involved in the binding of tRNA to the ribosomes. This Aster yellows witches'-broom phytoplasma (strain AYWB) protein is Small ribosomal subunit protein uS10.